The chain runs to 350 residues: GTPase Obg (350 aa).

The Obg domain occupies 1 to 159; sequence MKLVDEAEIL…RLLKLELRLL (159 aa). Positions 127-146 are disordered; the sequence is NMHFKSSVNRAPRQSTTGEE. The segment covering 130–143 has biased composition (polar residues); the sequence is FKSSVNRAPRQSTT. An OBG-type G domain is found at 160–337; that stretch reads ADVGLLGFPN…IMKDVMAFFD (178 aa). GTP-binding positions include 166 to 173, 191 to 195, 213 to 216, 287 to 290, and 318 to 320; these read GFPNAGKS, FTTLY, DVPG, NKAD, and SAL. 2 residues coordinate Mg(2+): Ser173 and Thr193.

This sequence belongs to the TRAFAC class OBG-HflX-like GTPase superfamily. OBG GTPase family. Monomer. It depends on Mg(2+) as a cofactor.

Its subcellular location is the cytoplasm. Its function is as follows. An essential GTPase which binds GTP, GDP and possibly (p)ppGpp with moderate affinity, with high nucleotide exchange rates and a fairly low GTP hydrolysis rate. Plays a role in control of the cell cycle, stress response, ribosome biogenesis and in those bacteria that undergo differentiation, in morphogenesis control. The polypeptide is GTPase Obg (Xanthomonas oryzae pv. oryzae (strain MAFF 311018)).